The primary structure comprises 567 residues: Mitochondrial distribution and morphology protein 34 (567 aa).

An SMP-LTD domain is found at 1-224 (MSFKFNEESF…LPSALFNMSR (224 aa)). Positions 392 to 416 (NKATETSSNLNADSEITPVSSSHNA) are enriched in polar residues. A disordered region spans residues 392–453 (NKATETSSNL…NRSSSFTSSI (62 aa)). Residues 417 to 452 (TSSVNTITSLTTSSLGSTAGSSNSKNTNRSSSFTSS) show a composition bias toward low complexity.

This sequence belongs to the MDM34 family. Component of the ER-mitochondria encounter structure (ERMES) or MDM complex, composed of MMM1, MDM10, MDM12 and MDM34.

The protein resides in the mitochondrion outer membrane. Functionally, component of the ERMES/MDM complex, which serves as a molecular tether to connect the endoplasmic reticulum (ER) and mitochondria. Components of this complex are involved in the control of mitochondrial shape and protein biogenesis, and function in nonvesicular lipid trafficking between the ER and mitochondria. MDM34 is required for the interaction of the ER-resident membrane protein MMM1 and the outer mitochondrial membrane-resident beta-barrel protein MDM10. This chain is Mitochondrial distribution and morphology protein 34, found in Vanderwaltozyma polyspora (strain ATCC 22028 / DSM 70294 / BCRC 21397 / CBS 2163 / NBRC 10782 / NRRL Y-8283 / UCD 57-17) (Kluyveromyces polysporus).